Here is a 194-residue protein sequence, read N- to C-terminus: Small ribosomal subunit protein uS4c (194 aa).

In terms of domain architecture, S4 RNA-binding spans 82–143 (MRLDNILFRL…KQRSKALIQD (62 aa)).

This sequence belongs to the universal ribosomal protein uS4 family. Part of the 30S ribosomal subunit. Contacts protein S5. The interaction surface between S4 and S5 is involved in control of translational fidelity.

It localises to the plastid. The protein localises to the chloroplast. One of the primary rRNA binding proteins, it binds directly to 16S rRNA where it nucleates assembly of the body of the 30S subunit. In terms of biological role, with S5 and S12 plays an important role in translational accuracy. The protein is Small ribosomal subunit protein uS4c (rps4) of Bobartia gladiata (Sword rush-lily).